Here is a 178-residue protein sequence, read N- to C-terminus: MSRIGNKVIIIPAGVEIINNDNVVTVKGPKGELTREFNKNIEIKVEGNEMTLVRPDDSKEMKTIHGTTRANLNNMVVGVSEGFKKELEMKGVGYRAQLQGSKLVLSVGKSHQDEVEAPEGITFTVANPTSISVEGINKEVVGQTAAYIRSLRSPEPYKGKGIRYVGEYVRLKEGKTGK.

The protein belongs to the universal ribosomal protein uL6 family. Part of the 50S ribosomal subunit.

Functionally, this protein binds to the 23S rRNA, and is important in its secondary structure. It is located near the subunit interface in the base of the L7/L12 stalk, and near the tRNA binding site of the peptidyltransferase center. In Streptococcus equi subsp. zooepidemicus (strain H70), this protein is Large ribosomal subunit protein uL6.